We begin with the raw amino-acid sequence, 192 residues long: Putative inactive ribonuclease 11 (192 aa).

The first 15 residues, 1 to 15 (MAVFLLLLALGLLLA), serve as a signal peptide directing secretion. The segment at 21 to 54 (RMKGTTEQFSQEEMQPAAKQTLEESANSTLSDKN) is disordered. A compositionally biased stretch (polar residues) spans 43-54 (EESANSTLSDKN). N47 and N104 each carry an N-linked (GlcNAc...) asparagine glycan.

Belongs to the pancreatic ribonuclease family.

Its subcellular location is the secreted. The chain is Putative inactive ribonuclease 11 (Rnase11) from Mus musculus (Mouse).